The following is a 467-amino-acid chain: 3-isopropylmalate dehydratase large subunit (467 aa).

[4Fe-4S] cluster is bound by residues Cys347, Cys407, and Cys410.

The protein belongs to the aconitase/IPM isomerase family. LeuC type 1 subfamily. As to quaternary structure, heterodimer of LeuC and LeuD. [4Fe-4S] cluster serves as cofactor.

The catalysed reaction is (2R,3S)-3-isopropylmalate = (2S)-2-isopropylmalate. The protein operates within amino-acid biosynthesis; L-leucine biosynthesis; L-leucine from 3-methyl-2-oxobutanoate: step 2/4. In terms of biological role, catalyzes the isomerization between 2-isopropylmalate and 3-isopropylmalate, via the formation of 2-isopropylmaleate. This chain is 3-isopropylmalate dehydratase large subunit, found in Picosynechococcus sp. (strain ATCC 27264 / PCC 7002 / PR-6) (Agmenellum quadruplicatum).